The primary structure comprises 305 residues: Oxygen-dependent coproporphyrinogen-III oxidase (305 aa).

Position 93 (Ser-93) interacts with substrate. A divalent metal cation is bound by residues His-97 and His-107. Catalysis depends on His-107, which acts as the Proton donor. Substrate is bound at residue 109-111; the sequence is NVR. A divalent metal cation is bound by residues His-146 and His-176. The tract at residues 241–276 is important for dimerization; it reads YVEFNLVFDRGTLFGLQSGGRTESILMSLPPQVRWG. Residue 259-261 coordinates substrate; that stretch reads GGR.

This sequence belongs to the aerobic coproporphyrinogen-III oxidase family. As to quaternary structure, homodimer. It depends on a divalent metal cation as a cofactor.

Its subcellular location is the cytoplasm. The enzyme catalyses coproporphyrinogen III + O2 + 2 H(+) = protoporphyrinogen IX + 2 CO2 + 2 H2O. It participates in porphyrin-containing compound metabolism; protoporphyrin-IX biosynthesis; protoporphyrinogen-IX from coproporphyrinogen-III (O2 route): step 1/1. In terms of biological role, involved in the heme biosynthesis. Catalyzes the aerobic oxidative decarboxylation of propionate groups of rings A and B of coproporphyrinogen-III to yield the vinyl groups in protoporphyrinogen-IX. The polypeptide is Oxygen-dependent coproporphyrinogen-III oxidase (Pseudomonas aeruginosa (strain LESB58)).